The chain runs to 447 residues: Retinoic acid receptor alpha (447 aa).

The segment at M1–P79 is modulating. Polar residues predominate over residues T47 to E61. Residues T47–P72 form a disordered region. 2 consecutive NR C4-type zinc fingers follow at residues C80–C100 and C116–C140. Positions C80–M145 form a DNA-binding region, nuclear receptor. Positions S146–P174 are hinge. Residues D175 to S409 enclose the NR LBD domain. The 9aaTAD signature appears at P400–N408. The segment at E407–P447 is disordered. A compositionally biased stretch (low complexity) spans S414–P447.

Belongs to the nuclear hormone receptor family. NR1 subfamily. In terms of assembly, heterodimer; with an rxr molecule. Binds DNA preferentially as a rar/rxr heterodimer.

It is found in the nucleus. Receptor for retinoic acid. Retinoic acid receptors bind as heterodimers to their target response elements in response to their ligands, all-trans or 9-cis retinoic acid, and regulate gene expression in various biological processes. The rar/rxr heterodimers bind to the retinoic acid response elements (RARE) composed of tandem 5'-AGGTCA-3' sites known as DR1-DR5. This is Retinoic acid receptor alpha (rara) from Takifugu rubripes (Japanese pufferfish).